Reading from the N-terminus, the 375-residue chain is UDP-N-acetylglucosamine--N-acetylmuramyl-(pentapeptide) pyrophosphoryl-undecaprenol N-acetylglucosamine transferase (375 aa).

UDP-N-acetyl-alpha-D-glucosamine is bound by residues 13-15, Asn124, Arg165, Ser193, and Gln294; that span reads TGG.

It belongs to the glycosyltransferase 28 family. MurG subfamily.

It localises to the cell inner membrane. The catalysed reaction is di-trans,octa-cis-undecaprenyl diphospho-N-acetyl-alpha-D-muramoyl-L-alanyl-D-glutamyl-meso-2,6-diaminopimeloyl-D-alanyl-D-alanine + UDP-N-acetyl-alpha-D-glucosamine = di-trans,octa-cis-undecaprenyl diphospho-[N-acetyl-alpha-D-glucosaminyl-(1-&gt;4)]-N-acetyl-alpha-D-muramoyl-L-alanyl-D-glutamyl-meso-2,6-diaminopimeloyl-D-alanyl-D-alanine + UDP + H(+). Its pathway is cell wall biogenesis; peptidoglycan biosynthesis. Its function is as follows. Cell wall formation. Catalyzes the transfer of a GlcNAc subunit on undecaprenyl-pyrophosphoryl-MurNAc-pentapeptide (lipid intermediate I) to form undecaprenyl-pyrophosphoryl-MurNAc-(pentapeptide)GlcNAc (lipid intermediate II). In Brucella anthropi (strain ATCC 49188 / DSM 6882 / CCUG 24695 / JCM 21032 / LMG 3331 / NBRC 15819 / NCTC 12168 / Alc 37) (Ochrobactrum anthropi), this protein is UDP-N-acetylglucosamine--N-acetylmuramyl-(pentapeptide) pyrophosphoryl-undecaprenol N-acetylglucosamine transferase.